The primary structure comprises 183 residues: (2E)-enoyl-[ACP] glycyltransferase (183 aa).

It belongs to the FcoT family.

It carries out the reaction a (3R)-3-[(carboxymethyl)amino]fatty acid + holo-[ACP] + H(+) = a (2E)-enoyl-[ACP] + glycine + H2O. The enzyme catalyses (3R)-3-[(carboxylmethyl)amino]decanoate + holo-[ACP] + H(+) = (2E)-decenoyl-[ACP] + glycine + H2O. It catalyses the reaction a fatty acyl-CoA + H2O = a fatty acid + CoA + H(+). Involved in the biosynthesis of a unique class of isonitrile lipopeptides (INLPs) that seem to play a role in metal acquisition. Catalyzes a Michael addition of glycine to the beta-position of an alpha,beta-unsaturated fatty acyl-[ACP], producing a (3R)-3-[(carboxymethyl)amino]fatty acid. Acts on the (2E)-decenoyl moiety loaded on the acyl-carrier protein (ACP) BQ2027_MB0103, forming the product (3R)-3-[(carboxymethyl)amino]decanoate released from the ACP. Displays thioesterase activity with a preference for long chain fatty acyl groups. This Mycobacterium bovis (strain ATCC BAA-935 / AF2122/97) protein is (2E)-enoyl-[ACP] glycyltransferase.